The sequence spans 684 residues: Translation factor GUF1 homolog, mitochondrial (684 aa).

Positions 82-270 (HLIRNFSIIA…AVIERIPQPK (189 aa)) constitute a tr-type G domain. GTP contacts are provided by residues 91-98 (AHVDHGKS), 163-167 (DTPGH), and 217-220 (NKID).

It belongs to the TRAFAC class translation factor GTPase superfamily. Classic translation factor GTPase family. LepA subfamily.

The protein resides in the mitochondrion inner membrane. It carries out the reaction GTP + H2O = GDP + phosphate + H(+). In terms of biological role, promotes mitochondrial protein synthesis. May act as a fidelity factor of the translation reaction, by catalyzing a one-codon backward translocation of tRNAs on improperly translocated ribosomes. Binds to mitochondrial ribosomes in a GTP-dependent manner. In Physcomitrium patens (Spreading-leaved earth moss), this protein is Translation factor GUF1 homolog, mitochondrial.